A 354-amino-acid polypeptide reads, in one-letter code: Putative F-box/kelch-repeat protein At5g03000 (354 aa).

The 50-residue stretch at 37 to 86 (PTVFSSLPDELILNCLARVSRFYRPSLSLVNKEFQSLIASPDLEATRSRI) folds into the F-box domain. 2 Kelch repeats span residues 143–189 (EIYI…VIDG) and 190–236 (KIYV…FPGK).

This Arabidopsis thaliana (Mouse-ear cress) protein is Putative F-box/kelch-repeat protein At5g03000.